The chain runs to 547 residues: Glucose-6-phosphate isomerase (547 aa).

The active-site Proton donor is glutamate 351. Active-site residues include histidine 382 and lysine 510.

The protein belongs to the GPI family.

It localises to the cytoplasm. The enzyme catalyses alpha-D-glucose 6-phosphate = beta-D-fructose 6-phosphate. It functions in the pathway carbohydrate biosynthesis; gluconeogenesis. It participates in carbohydrate degradation; glycolysis; D-glyceraldehyde 3-phosphate and glycerone phosphate from D-glucose: step 2/4. Its function is as follows. Catalyzes the reversible isomerization of glucose-6-phosphate to fructose-6-phosphate. This chain is Glucose-6-phosphate isomerase, found in Beijerinckia indica subsp. indica (strain ATCC 9039 / DSM 1715 / NCIMB 8712).